We begin with the raw amino-acid sequence, 149 residues long: Large ribosomal subunit protein uL15 (149 aa).

2 stretches are compositionally biased toward basic residues: residues 1–14 (MPTR…HRGH) and 21–30 (RVGKHRKHPG). A disordered region spans residues 1-43 (MPTRFSKTRKHRGHVSAGKGRVGKHRKHPGGRGMAGGQHHHRT).

This sequence belongs to the universal ribosomal protein uL15 family. In terms of assembly, component of the large ribosomal subunit (LSU). Mature N.crassa ribosomes consist of a small (40S) and a large (60S) subunit. The 40S small subunit contains 1 molecule of ribosomal RNA (18S rRNA) and at least 32 different proteins. The large 60S subunit contains 3 rRNA molecules (26S, 5.8S and 5S rRNA) and at least 42 different proteins.

Its subcellular location is the cytoplasm. Its function is as follows. Component of the ribosome, a large ribonucleoprotein complex responsible for the synthesis of proteins in the cell. The small ribosomal subunit (SSU) binds messenger RNAs (mRNAs) and translates the encoded message by selecting cognate aminoacyl-transfer RNA (tRNA) molecules. The large subunit (LSU) contains the ribosomal catalytic site termed the peptidyl transferase center (PTC), which catalyzes the formation of peptide bonds, thereby polymerizing the amino acids delivered by tRNAs into a polypeptide chain. The nascent polypeptides leave the ribosome through a tunnel in the LSU and interact with protein factors that function in enzymatic processing, targeting, and the membrane insertion of nascent chains at the exit of the ribosomal tunnel. This Neurospora crassa (strain ATCC 24698 / 74-OR23-1A / CBS 708.71 / DSM 1257 / FGSC 987) protein is Large ribosomal subunit protein uL15 (rpl-28).